Reading from the N-terminus, the 366-residue chain is D-alanine--D-alanine ligase (366 aa).

Residues 145 to 348 (KRLLDDAGLA…YQSLITKLIE (204 aa)) enclose the ATP-grasp domain. Residue 175–230 (VEQLGLPLFIKPANLGSSVGISKVNNEAEFNAALSMAFEYDLKVIIESAIVGREIE) coordinates ATP. Residues D302, E315, and N317 each contribute to the Mg(2+) site.

It belongs to the D-alanine--D-alanine ligase family. The cofactor is Mg(2+). It depends on Mn(2+) as a cofactor.

The protein resides in the cytoplasm. The enzyme catalyses 2 D-alanine + ATP = D-alanyl-D-alanine + ADP + phosphate + H(+). Its pathway is cell wall biogenesis; peptidoglycan biosynthesis. Cell wall formation. In Proteus mirabilis (strain HI4320), this protein is D-alanine--D-alanine ligase.